The chain runs to 126 residues: 3-aminobutyryl-CoA ammonia lyase (126 aa).

The protein belongs to the KAL family. As to quaternary structure, homohexamer.

The catalysed reaction is (3S)-3-aminobutanoyl-CoA = (2E)-butenoyl-CoA + NH4(+). The protein operates within amino-acid degradation; L-lysine degradation via acetate pathway. Involved in the anaerobic fermentation of lysine. Catalyzes the deamination of L-3-aminobutyryl-CoA to produce crotonoyl-CoA. This is 3-aminobutyryl-CoA ammonia lyase from Acetoanaerobium sticklandii (strain ATCC 12662 / DSM 519 / JCM 1433 / CCUG 9281 / NCIMB 10654 / HF) (Clostridium sticklandii).